The chain runs to 1056 residues: Potassium transporter TRK1 (1056 aa).

The Cytoplasmic segment spans residues 1-46 (MLYRVSGFYKRHTRNFTNIDYGYYIRNFIHHIASKIYPYAKVVLPN). The chain crosses the membrane as a helical span at residues 47-67 (FRAAHYFYILTLVILGSILVY). Over 68-73 (PVKTCA) the chain is Extracellular. An intramembrane segment occupies 74 to 90 (YIDVLFFTAGASTQAGL). Topologically, residues 91-99 (NTVNVNDLS) are extracellular. The helical transmembrane segment at 100–122 (LYQQIVLYLLATLATPIFIHGSL) threads the bilayer. Topologically, residues 123–622 (LFVRLYYFER…LGGIEYRAVK (500 aa)) are cytoplasmic. Disordered stretches follow at residues 180–276 (REAE…IDPE), 290–350 (KNQE…EDED), and 404–571 (PWTS…SIEN). Over residues 186-203 (SSSSPQSSSSQTSQPVST) the composition is skewed to low complexity. The segment covering 236–245 (EKIHFEEPQR) has biased composition (basic and acidic residues). Over residues 335–344 (PATNSVGTGN) the composition is skewed to polar residues. The span at 412–423 (TLSNSSKKGSLS) shows a compositional bias: low complexity. 2 stretches are compositionally biased toward acidic residues: residues 428-449 (DTEDDSEDEEYASIDSETSDIS) and 469-487 (YEEDEDEDEHNSDDDDDGE). Positions 521 to 533 (RSNTLDTPQQNTS) are enriched in polar residues. A compositionally biased stretch (basic residues) spans 537 to 549 (KIRKKAPKRKTPR). The segment covering 553–563 (NASFNQHSNVS) has biased composition (polar residues). The helical transmembrane segment at 623-646 (LLIKIIVVYYVGFNIIPGVMLSIW) threads the bilayer. Topologically, residues 647 to 665 (IYCMPHYKNLMISSSISPA) are extracellular. An intramembrane segment occupies 666–682 (WWAFFTSQSSFNDLGLT). Over 683-693 (LTSNSMMSFNQ) the chain is Extracellular. The chain crosses the membrane as a helical span at residues 694–710 (NAFVQILCSFLIVIGNT). Residues 711–754 (GFPILLRFIIWVMFKTARPLSLYKESLGFLLDHPRRCFTLLFPS) are Cytoplasmic-facing. A helical membrane pass occupies residues 755–778 (VPTWWLFFILVVLNGFDLVIFCIL). Topologically, residues 779–793 (DLHDDTFKGVDMGYR) are extracellular. The stretch at 794–810 (VLNGLFQAFCTRTVGFS) is an intramembrane region. The Extracellular portion of the chain corresponds to 811 to 817 (VMDLSQL). A helical membrane pass occupies residues 818-841 (HAATQVSYLIMMYISVLPIAISVR). The Cytoplasmic portion of the chain corresponds to 842–874 (RTNVYEEQSLGVYAKENAEGVDESAPSNYVGSH). The helical transmembrane segment at 875–896 (LRNQLSYDLWYICLGLFIICIA) threads the bilayer. The Extracellular segment spans residues 897–909 (EGKRLKEQDLRFS). Residues 910 to 928 (IFAVLFEIVSAYGTVGMSM) lie within the membrane without spanning it. The Extracellular portion of the chain corresponds to 929-942 (GYPGVDCSLSGEFN). Residues 943-965 (VISKLVIIAMMIRGRHRGLPYTI) form a helical membrane-spanning segment. Residues 966–1056 (DRAIMLPNAA…RYVVRTVSEV (91 aa)) lie on the Cytoplasmic side of the membrane.

Belongs to the TrkH potassium transport family.

The protein resides in the cell membrane. The enzyme catalyses K(+)(in) = K(+)(out). It carries out the reaction chloride(in) = chloride(out). TRK1-mediated chloride conductance is blocked by 4,4'-diisothiocyanatostilbene-2,2'-disulfonic acid. Functionally, potassium transporter that mediates K(+) influx, as well as Cl(-) efflux as a secondary function. TRK1 is the major K(+) uptake transporter that regulates membrane potential and intracellular pH. The TRK1-mediated Cl(-) efflux should serve as a Cl(-) detoxification route and may play a role in sustaining C.albicans on mammalian epithelial surfaces, or in physiological saline solutions such as saliva. In terms of biological role, mediates candidacidal activities of cysteine-free peptides, but not of defensins. The hallmark of salivary gland-secreted histatin-5 (Hst 5) killing of C.albicans is the rapid efflux of cellular ATP and other small nucleotides and ions from the cell as well as concurrent intracellular uptake of propidium iodide (PI). TRK1 is the channel for Hst 5-induced killing and histatin-5 may directly or indirectly alter TRK1 function, allowing the efflux of larger anions, including ATP, and the influx of small cationic dyes, such as PI. This is Potassium transporter TRK1 from Candida albicans (strain SC5314 / ATCC MYA-2876) (Yeast).